The primary structure comprises 254 residues: N-acetylglucosamine-induced protein 1 (254 aa).

Its subcellular location is the cytoplasm. Functionally, N-acetylglucosamine-induced protein which plays a role in the N-acetylglucosamine metabolic pathway. This chain is N-acetylglucosamine-induced protein 1, found in Candida albicans (strain SC5314 / ATCC MYA-2876) (Yeast).